A 530-amino-acid polypeptide reads, in one-letter code: MSSIGGLRPAAGEQPGVGPHLQAVGGALLLCGLAVLLDWVWLQRQRAGGIPPGPKPRPLVGNFGYLLLPRFLRLHFWLGSGSQTDTVGRHVYLARLARVYGNIFSFFIGHRLVVVLSDFQSVREALVQQAEVFSDRPRMPLISILTKEKGIVFAHYGPIWKQQRRFSHSTLRHFGLGKLSLEPRIIEEFAYVKAEMQKHGEAPFSPFPVISNAVSNIICSLCFGQRFDYTNKEFKKVLDFMSRGLEICLHSQLFLINLCPWFYYLPFGPFKELRQIERDITCFLKNIIKEHQESLDANNPQDFIDMYLLHTQEEKDKCKGTNFDEDYLFYIIGDLFIAGTDTTTNSLLWCLLYMSLNPGVQKKVHEEIERVIGRDRAPSLTDKAQMPYTEATIMEVQRLSMVVPLAIPHMTSEKTVLQGYSIPKGTVVLPNLWSIHRDPVIWEKPDDFCPHRFLDDQGQLLKRETFIPFGIGKRVCMGEQLAKMELFLMFVSLMQSFTFALPEGSEKPIMTGRFGLTLAPHPFNVTVSKR.

Helical transmembrane passes span 21-41 (LQAV…DWVW), 99-119 (VYGN…LSDF), 247-267 (ICLH…YLPF), and 328-348 (LFYI…NSLL). Residue cysteine 476 participates in heme binding. Residues 481–501 (LAKMELFLMFVSLMQSFTFAL) traverse the membrane as a helical segment.

This sequence belongs to the cytochrome P450 family. Heme serves as cofactor. In terms of tissue distribution, specifically expressed in thymus and brain. In brain, expressed in cortex, cerebellum, olfactory bulbs, pons and medulla and the limbic structures (at protein level).

The protein localises to the endoplasmic reticulum membrane. The protein resides in the microsome membrane. Its subcellular location is the mitochondrion inner membrane. The catalysed reaction is an omega-methyl-long-chain fatty acid + reduced [NADPH--hemoprotein reductase] + O2 = an omega-hydroxy-long-chain fatty acid + oxidized [NADPH--hemoprotein reductase] + H2O + H(+). It catalyses the reaction (5Z,8Z,11Z,14Z)-eicosatetraenoate + reduced [NADPH--hemoprotein reductase] + O2 = 19-hydroxy-(5Z,8Z,11Z,14Z)-eicosatetraenoate + oxidized [NADPH--hemoprotein reductase] + H2O + H(+). It carries out the reaction (5Z,8Z,11Z,14Z)-eicosatetraenoate + reduced [NADPH--hemoprotein reductase] + O2 = 20-hydroxy-(5Z,8Z,11Z,14Z)-eicosatetraenoate + oxidized [NADPH--hemoprotein reductase] + H2O + H(+). The enzyme catalyses N-[(5Z,8Z,11Z,14Z)-eicosatetraenoyl]-serotonin + reduced [NADPH--hemoprotein reductase] + O2 = 2-oxo-N-[(5Z,8Z,11Z,14Z)-eicosatetraenoyl]-serotonin + oxidized [NADPH--hemoprotein reductase] + H2O + H(+). In terms of biological role, a cytochrome P450 monooxygenase involved in the metabolism of arachidonic acid and its conjugates. Mechanistically, uses molecular oxygen inserting one oxygen atom into a substrate, and reducing the second into a water molecule, with two electrons provided by NADPH via cytochrome P450 reductase (CPR; NADPH-ferrihemoprotein reductase). Acts as an omega and omega-1 hydroxylase for arachidonic acid and possibly for other long chain fatty acids. May modulate the arachidonic acid signaling pathway and play a role in other fatty acid signaling processes. May down-regulate the biological activities of N-arachidonoyl-serotonin, an endocannabinoid that has anti-nociceptive effects through inhibition of fatty acid amide hydrolase FAAH, TRPV1 receptor and T-type calcium channels. Catalyzes C-2 oxidation of the indole ring of N-arachidonoyl-serotonin forming a less active product 2-oxo-N-arachidonoyl-serotonin. The polypeptide is Cytochrome P450 2U1 (Cyp2u1) (Rattus norvegicus (Rat)).